The chain runs to 267 residues: Heme-containing CO-sensing transcriptional regulator RcoM 1 (267 aa).

The region spanning 15–86 (RAETFQHKLE…KSRDKLRFLL (72 aa)) is the PAS domain. The heme site is built by histidine 74 and methionine 104. In terms of domain architecture, HTH LytTR-type spans 161–266 (IPVYRKNRVI…TAQLKELLGV (106 aa)).

Heme serves as cofactor.

The protein resides in the cytoplasm. Its function is as follows. One-component, b-type heme-containing aerobic sensor and transcriptional regulator that responds to CO by activating the expression of the oxidation operon cox. This Paraburkholderia xenovorans (strain LB400) protein is Heme-containing CO-sensing transcriptional regulator RcoM 1 (rcoM1).